Reading from the N-terminus, the 199-residue chain is Putative HMP/thiamine permease protein YkoE (199 aa).

6 helical membrane-spanning segments follow: residues 9–29, 40–60, 63–83, 85–105, 114–134, and 143–163; these read IVIMSVISIVFAVVYLLFTHF, IAYEPIYGIWFIVSVIAAYMI, PGAALVSEIIAALVECLLGNP, GPMVIVIGIVQGLGAEAVFLA, PVLMLAGMGSSVASFIYDLFV, and GYLLIMLVIRLISGALLAGLL.

The complex is composed of two ATP-binding proteins (YkoD), two transmembrane proteins (YkoC and YkoE) and a solute-binding protein (YkoF).

The protein resides in the cell membrane. Its function is as follows. Part of the ABC transporter complex YkoCDEF that could transport hydroxymethylpyrimidine (HMP) and/or thiamine. Could also transport other HMP-containing products. Probably responsible for the translocation of the substrate across the membrane. In Bacillus subtilis (strain 168), this protein is Putative HMP/thiamine permease protein YkoE (ykoE).